Reading from the N-terminus, the 109-residue chain is Aquaporin-2 (109 aa).

The Cytoplasmic portion of the chain corresponds to 1-6 (SIAFSR). Residues 7–27 (AVFSEFLATLLFVFFGLGSAL) form a helical membrane-spanning segment. Over 28 to 35 (NWPQALPS) the chain is Extracellular. A helical membrane pass occupies residues 36–54 (VLQIAMAFGLAIGTLVQTL). Topologically, residues 55-59 (GHISG) are cytoplasmic. The segment at residues 60 to 69 (AHINPAVTVA) is an intramembrane region (discontinuously helical). Positions 63 to 65 (NPA) match the NPA 1 motif. The Cytoplasmic segment spans residues 70–80 (CLVGCHVSFLR). Residues 81 to 102 (ATFYLAAQLLGAVAGAALLHEL) traverse the membrane as a helical segment. Residues 103-109 (TPPDIRG) are Extracellular-facing.

This sequence belongs to the MIP/aquaporin (TC 1.A.8) family. Homotetramer. Serine phosphorylation is necessary and sufficient for expression at the apical membrane. Endocytosis is not phosphorylation-dependent. Post-translationally, N-glycosylated.

It localises to the apical cell membrane. It is found in the basolateral cell membrane. The protein resides in the cell membrane. Its subcellular location is the cytoplasmic vesicle membrane. The protein localises to the golgi apparatus. It localises to the trans-Golgi network membrane. It catalyses the reaction H2O(in) = H2O(out). The catalysed reaction is glycerol(in) = glycerol(out). Its function is as follows. Forms a water-specific channel that provides the plasma membranes of renal collecting duct with high permeability to water, thereby permitting water to move in the direction of an osmotic gradient. Plays an essential role in renal water homeostasis. Could also be permeable to glycerol. The polypeptide is Aquaporin-2 (Elephas maximus (Indian elephant)).